The sequence spans 160 residues: MADVCLRLQYACPWQSNMAAHGRQPVLSSTPLQILFHLNGWYFAAFFVAEILMFIYKGVILPYPQDNLILDVVLLLLFSGLETLRLFYGWKGNLCQRSLALFVSVAILVPCAVLSVYYLLLQTFVLRLEFVLNAVLLCFYGFELVLGVMTISIFSRANIY.

Helical transmembrane passes span 41–61 (WYFA…GVIL), 68–88 (LILD…RLFY), 101–121 (LFVS…YLLL), and 134–154 (AVLL…ISIF).

In terms of assembly, part of the tectonic-like complex (also named B9 complex).

Its subcellular location is the membrane. The protein resides in the cytoplasm. It localises to the cytoskeleton. It is found in the cilium basal body. Its function is as follows. Part of the tectonic-like complex which is required for tissue-specific ciliogenesis and may regulate ciliary membrane composition. The sequence is that of Transmembrane protein 216 (tmem216) from Danio rerio (Zebrafish).